The primary structure comprises 1099 residues: Solute carrier family 12 member 1 (1099 aa).

The Cytoplasmic segment spans residues 1-177 (MSLNNSSSVF…EDNKAGAVKF (177 aa)). The RFXV motif signature appears at 20 to 23 (RFQV). Residues serine 60 and serine 90 each carry the phosphoserine modification. Threonine 94, threonine 99, threonine 104, and threonine 117 each carry phosphothreonine. A Phosphoserine modification is found at serine 119. Residue serine 129 is modified to Phosphoserine; by AMPK. A Phosphoserine modification is found at serine 147. The disordered stretch occupies residues 147–169 (SADRVANGEGMPGEEHAENKEED). Over residues 159 to 169 (GEEHAENKEED) the composition is skewed to basic and acidic residues. The chain crosses the membrane as a helical span at residues 178 to 198 (GWVKGVLVRCMLNIWGVMLFI). Topologically, residues 199–201 (RLS) are extracellular. Residues 202–222 (WIVGEAGIGLGVVIILLSTMV) form a helical membrane-spanning segment. Residues 223–259 (TSITGLSTSAIATNGFVRGGGAYYLISRSLGPEFGGS) are Cytoplasmic-facing. Residues 260-280 (IGLIFAFANAVAVAMYVVGFA) form a helical membrane-spanning segment. Residues 281-302 (ETVVDLLKESDSMMVDPTNDIR) are Extracellular-facing. The helical transmembrane segment at 303-323 (IIGSITVVILLGISVAGMEWE) threads the bilayer. Residues 324 to 327 (AKAQ) are Cytoplasmic-facing. The helical transmembrane segment at 328-348 (VILLIILLIAIANFFIGTVIP) threads the bilayer. Residues 349–379 (SNNEKKSRGFFNYQASIFAENFGPSFTKGEG) are Extracellular-facing. Residues 380-400 (FFSVFAIFFPAATGILAGANI) form a helical membrane-spanning segment. Residues 401-417 (SGDLEDPQDAIPRGTML) lie on the Cytoplasmic side of the membrane. A helical transmembrane segment spans residues 418–438 (AIFITTVAYIGVAICVGACVV). Over 439 to 550 (RDATGSMNDT…NNEPLRGYIL (112 aa)) the chain is Extracellular. N-linked (GlcNAc...) asparagine glycosylation is found at asparagine 446 and asparagine 456. 2 helical membrane passes run 551 to 571 (TFVI…APII) and 572 to 592 (SNFF…ASYA). The Extracellular segment spans residues 593 to 609 (KSPGWRPAYGIYNMWVS). The helical transmembrane segment at 610–630 (LFGAVLCCAVMFVINWWAAVI) threads the bilayer. Residues 631–1099 (TYVIEFFLYI…NHKNVLTFYS (469 aa)) are Cytoplasmic-facing.

This sequence belongs to the SLC12A transporter family. In terms of assembly, when phosphorylated, interacts with PPP3CB. In terms of processing, phosphorylated at Ser-90, Thr-99 and Thr-104 by OXSR1/OSR1 and STK39/SPAK downstream of WNK kinases (WNK1, WNK2, WNK3 or WNK4), promoting its activity. Predominant in kidney. The 3 isoforms are differentially distributed within the kidney: B almost exclusively in cortex, F almost exclusively in medulla, and A about equally distributed.

Its subcellular location is the apical cell membrane. The enzyme catalyses K(+)(out) + 2 chloride(out) + Na(+)(out) = K(+)(in) + 2 chloride(in) + Na(+)(in). Its activity is regulated as follows. Activated following phosphorylation by OXSR1/OSR1 and STK39/SPAK downstream of WNK kinases (WNK1, WNK2, WNK3 or WNK4). Its function is as follows. Renal sodium, potassium and chloride ion cotransporter that mediates the transepithelial NaCl reabsorption in the thick ascending limb and plays an essential role in the urinary concentration and volume regulation. Electrically silent transporter system. This Oryctolagus cuniculus (Rabbit) protein is Solute carrier family 12 member 1 (SLC12A1).